The following is a 288-amino-acid chain: Probable syndecan (288 aa).

The N-terminal stretch at 1-26 (MILKLNFCLSTYSVLILLSLSTQAFA) is a signal peptide. Topologically, residues 27–231 (ANQAKTKVVP…ETLANGFYAA (205 aa)) are extracellular. The interval 67 to 175 (EVNGSGYPTD…NIHNDEDFFT (109 aa)) is disordered. Asparagine 69 carries N-linked (GlcNAc...) asparagine glycosylation. O-linked (Xyl...) (glycosaminoglycan) serine glycans are attached at residues serine 71 and serine 86. Residues 89 to 104 (PPSSATTKSDKVTSPS) show a composition bias toward polar residues. The span at 106–124 (AVVTAKPTTVPTTTASFKP) shows a compositional bias: low complexity. The segment covering 141 to 164 (VEEDEDDDEDEDEDDEDDEEDFAD) has biased composition (acidic residues). Serine 214 is a glycosylation site (O-linked (Xyl...) (glycosaminoglycan) serine). Residues 232 to 252 (IAGGVLVAVITAILLVLFVVF) traverse the membrane as a helical segment. Residues 253 to 288 (RIRKKDEGSYALDEPKQARPYASYGYTKASTKEFYA) lie on the Cytoplasmic side of the membrane.

This sequence belongs to the syndecan proteoglycan family.

The protein localises to the membrane. It localises to the cell surface. It is found in the cell junction. The protein resides in the cytoplasm. In terms of biological role, cell surface proteoglycan that bears heparan sulfate. Required for correct mitotic spindle orientation of the ABar blastomere division plane and this may be through modulation of astral microtubule array, and in association with the wnt-signaling proteins mig-5 and dsh-2. Involved in the migration of AQR and PQR neurons, which descend from the Q neuroblasts. Promotes the axon guidance of D-type motor neurons. The protein is Probable syndecan of Caenorhabditis elegans.